The following is a 1298-amino-acid chain: MKVVPEKNAVRILWGRERGARAMGAQRLLQELVEDKTRWMKWEGKRVELPDSPRSTFLLAFSPDRTLLASTHVNHNIYITEVKTGKCVHSLIGHRRTPWCVTFHPTISGLIASGCLDGEVRIWDLHGGSESWFTDSNNAIASLAFHPTAQLLLIATANEIHFWDWSRREPFAVVKTASEMERVRLVRFDPLGHYLLTAIVNPSNQQGDDEPEIPIDGTELSHYRQRALLQSQPVRRTPLLHNFLHMLSSRSSGIQVGEQSTVQDSATPSPPPPPPQPSTERPRTSAYIRLRQRVSYPTAECCQHLGILCLCSRCSGTRVPSLLPHQDSVPPASARATTPSFSFVQTEPFHPPEQASSTQQDQGLLNRPSAFSTVQSSTAGNTLRNLSLGPTRRSLGGPLSSHPSRYHREIAPGLTGSEWTRTVLSLNSRSEAESMPPPRTSASSVSLLSVLRQQEGGSQASVYTSATEGRGFPASGLATESDGGNGSSQNNSGSIRHELQCDLRRFFLEYDRLQELDQSLSGEAPQTQQAQEMLNNNIESERPGPSHQPTPHSSENNSNLSRGHLNRCRACHNLLTFNNDTLRWERTTPNYSSGEASSSWQVPSSFESVPSSGSQLPPLERTEGQTPSSSRLELSSSASPQEERTVGVAFNQETGHWERIYTQSSRSGTVSQEALHQDMPEESSEEDSLRRRLLESSLISLSRYDGAGSREHPIYPDPARLSPAAYYAQRMIQYLSRRDSIRQRSMRYQQNRLRSSTSSSSSDNQGPSVEGTDLEFEDFEDNGDRSRHRAPRNARMSAPSLGRFVPRRFLLPEYLPYAGIFHERGQPGLATHSSVNRVLAGAVIGDGQSAVASNIANTTYRLQWWDFTKFDLPEISNASVNVLVQNCKIYNDASCDISADGQLLAAFIPSSQRGFPDEGILAVYSLAPHNLGEMLYTKRFGPNAISVSLSPMGRYVMVGLASRRILLHPSTEHMVAQVFRLQQAHGGETSMRRVFNVLYPMPADQRRHVSINSARWLPEPGLGLAYGTNKGDLVICRPEALNSGVEYYWDQLNETVFTVHSNSRSSERPGTSRATWRTDRDMGLMNAIGLQPRNPATSVTSQGTQTLALQLQNAETQTEREVPEPGTAASGPGEGEGSEYGASGEDALSRIQRLMAEGGMTAVVQREQSTTMASMGGFGNNIIVSHRIHRSSQTGTEPGAAHTSSPQPSTSRGLLPEAGQLAERGLSPRTASWDQPGTPGREPTQPTLPSSSPVPIPVSLPSAEGPTLHCELTNNNHLLDGGSSRGDAAGPRGEPRNR.

The segment at 1 to 22 is interaction with DDB1; that stretch reads MKVVPEKNAVRILWGRERGARA. Residue Lys45 forms a Glycyl lysine isopeptide (Lys-Gly) (interchain with G-Cter in ubiquitin) linkage. WD repeat units lie at residues 51-90, 93-133, and 135-175; these read DSPR…CVHS, GHRR…ESWF, and DSNN…AVVK. Ser52 bears the Phosphoserine; by MTOR mark. The segment covering 254–266 has biased composition (polar residues); it reads IQVGEQSTVQDSA. Positions 254–284 are disordered; that stretch reads IQVGEQSTVQDSATPSPPPPPPQPSTERPRT. Residues 268–277 are compositionally biased toward pro residues; that stretch reads PSPPPPPPQP. The PxP motif 1 signature appears at 275–281; sequence PQPSTER. Ser328 carries the phosphoserine modification. The tract at residues 343–413 is disordered; it reads FVQTEPFHPP…SRYHREIAPG (71 aa). The span at 354–385 shows a compositional bias: polar residues; it reads QASSTQQDQGLLNRPSAFSTVQSSTAGNTLRN. Residues Ser394 and Ser443 each carry the phosphoserine modification. Polar residues-rich tracts occupy residues 458–467, 547–561, and 590–601; these read SQASVYTSAT, HQPT…SNLS, and NYSSGEASSSWQ. 4 disordered regions span residues 458-494, 538-561, 590-690, and 747-796; these read SQAS…NSGS, IESE…SNLS, NYSS…DSLR, and RYQQ…NARM. 2 stretches are compositionally biased toward low complexity: residues 602 to 614 and 628 to 639; these read VPSS…SSGS and SSSRLELSSSAS. Ser635 and Ser639 each carry phosphoserine. Positions 661–674 are enriched in polar residues; it reads YTQSSRSGTVSQEA. An Asymmetric dimethylarginine modification is found at Arg747. Acidic residues predominate over residues 772–781; that stretch reads TDLEFEDFED. Phosphoserine; by IKKA is present on Ser1043. The LIR motif lies at 1043 to 1052; the sequence is SGVEYYWDQL. Polar residues predominate over residues 1060–1075; sequence HSNSRSSERPGTSRAT. The segment at 1060–1079 is disordered; the sequence is HSNSRSSERPGTSRATWRTD. Short sequence motifs (TQT motif) lie at residues 1104–1106 and 1116–1118; these read TQT. Disordered stretches follow at residues 1112-1143, 1190-1214, and 1227-1298; these read QNAE…YGAS, RSSQ…SRGL, and SPRT…PRNR. Polar residues predominate over residues 1191–1212; the sequence is SSQTGTEPGAAHTSSPQPSTSR. A Phosphoserine modification is found at Ser1205. The short motif at 1206–1212 is the PxP motif 2 element; sequence PQPSTSR.

The protein belongs to the WD repeat AMBRA1 family. Component of the DCX(AMBRA1) E3 ubiquitin ligase complex, also named CRL4(AMBRA1), at least composed of CUL4 (CUL4A or CUL4B), DDB1, AMBRA1 and RBX1. Interacts with BECN1. Probably forms a complex with BECN1 and PIK3C3. Interacts with BECN2. Interacts with BCL2; leading to prevent interaction with BCN1 and autophagy, interaction is disrupted upon autophagy induction. Interacts with ULK1. Interacts (via PxP motifs) with PPP2CA; enhancing interaction between PPP2CA and MYC or FOXO3. Forms a complex with PPP2CA and BECN1; AMBRA1 and BECN1 components of the complex regulate MYC stability via different pathways. Interacts (TQT motifs) with DYNLL1 and DYNLL2; tethering AMBRA1 and the BECN1-PIK3C3 complex in absence of autophagy. Interacts with TRAF6; interaction is required to mediate 'Lys-63'-linked ubiquitination of ULK1. Interacts with TRIM32; promoting activation of ULK1 by TRIM32 via unanchored 'Lys-63'-linked polyubiquitin chains. Interacts with PRKN. Interacts (via LIR motif) with LC3 (MAP1LC3A, MAP1LC3B or MAP1LC3C). Interacts with HUWE1. Interacts with PTK2/FAK. Interacts with SRC; required for SRC trafficking to autophagosomes. In terms of processing, phosphorylation at Ser-52 by MTOR inhibits its ability to regulate autophagy and mediate ubiquitination of ULK1. Phosphorylation by ULK1 in response to autophagy induction abolishes interaction with DYNLL1 and DYNLL2, releasing AMBRA1 from the cytoskeletal docking site to induce autophagosome nucleation. Phosphorylation by MTOR inhibits interaction with PPP2CA and subsequent dephosphorylation of MYC. Phosphorylation at Ser-1043 by CHUK/IKKA promotes its interaction with ATG8 family proteins GABARAP and MAP1LC3B and its mitophagic activity. Ubiquitinated by RNF2 via 'Lys-48'-linkage in unstressed cells, leading to its degradation by the proteasome. Induction of autophagy promotes stabilization via interaction with CUL4 (CUL4A or CUL4B) and DDB1. Upon prolonged starvation, ubiquitinated and degraded, terminating the autophagy response. Post-translationally, undergoes proteolytic processing by caspase-6 (CASP6), caspase-7 (CASP7) and caspase-8 (CASP8) during apoptosis, resulting in the dismantling of the autophagic machinery and the accomplishment of the programmed cell death program. Also cleaved by calpains during apoptosis, which mediate a complete proteolytic degradation.

The protein localises to the endoplasmic reticulum. It is found in the cytoplasm. Its subcellular location is the cytoskeleton. It localises to the cytoplasmic vesicle. The protein resides in the autophagosome. The protein localises to the mitochondrion. It is found in the cytosol. Its subcellular location is the nucleus. It localises to the cell junction. The protein resides in the focal adhesion. It participates in protein modification; protein ubiquitination. Its function is as follows. Substrate-recognition component of a DCX (DDB1-CUL4-X-box) E3 ubiquitin-protein ligase complex involved in cell cycle control and autophagy. The DCX(AMBRA1) complex specifically mediates the polyubiquitination of target proteins such as BECN1, CCND1, CCND2, CCND3, ELOC and ULK1. Acts as an upstream master regulator of the transition from G1 to S cell phase: AMBRA1 specifically recognizes and binds phosphorylated cyclin-D (CCND1, CCND2 and CCND3), leading to cyclin-D ubiquitination by the DCX(AMBRA1) complex and subsequent degradation. By controlling the transition from G1 to S phase and cyclin-D degradation, AMBRA1 acts as a tumor suppressor that promotes genomic integrity during DNA replication and counteracts developmental abnormalities and tumor growth. AMBRA1 also regulates the cell cycle by promoting MYC dephosphorylation and degradation independently of the DCX(AMBRA1) complex: acts via interaction with the catalytic subunit of protein phosphatase 2A (PPP2CA), which enhances interaction between PPP2CA and MYC, leading to MYC dephosphorylation and degradation. Acts as a regulator of Cul5-RING (CRL5) E3 ubiquitin-protein ligase complexes by mediating ubiquitination and degradation of Elongin-C (ELOC) component of CRL5 complexes. Acts as a key regulator of autophagy by modulating the BECN1-PIK3C3 complex: controls protein turnover during neuronal development, and regulates normal cell survival and proliferation. In normal conditions, AMBRA1 is tethered to the cytoskeleton via interaction with dyneins DYNLL1 and DYNLL2. Upon autophagy induction, AMBRA1 is released from the cytoskeletal docking site to induce autophagosome nucleation by mediating ubiquitination of proteins involved in autophagy. The DCX(AMBRA1) complex mediates 'Lys-63'-linked ubiquitination of BECN1, increasing the association between BECN1 and PIK3C3 to promote PIK3C3 activity. In collaboration with TRAF6, AMBRA1 mediates 'Lys-63'-linked ubiquitination of ULK1 following autophagy induction, promoting ULK1 stability and kinase activity. Also activates ULK1 via interaction with TRIM32: TRIM32 stimulates ULK1 through unanchored 'Lys-63'-linked polyubiquitin chains. Also acts as an activator of mitophagy via interaction with PRKN and LC3 proteins (MAP1LC3A, MAP1LC3B or MAP1LC3C); possibly by bringing damaged mitochondria onto autophagosomes. Also activates mitophagy by acting as a cofactor for HUWE1; acts by promoting HUWE1-mediated ubiquitination of MFN2. AMBRA1 is also involved in regulatory T-cells (Treg) differentiation by promoting FOXO3 dephosphorylation independently of the DCX(AMBRA1) complex: acts via interaction with PPP2CA, which enhances interaction between PPP2CA and FOXO3, leading to FOXO3 dephosphorylation and stabilization. May act as a regulator of intracellular trafficking, regulating the localization of active PTK2/FAK and SRC. Also involved in transcription regulation by acting as a scaffold for protein complexes at chromatin. The sequence is that of Activating molecule in BECN1-regulated autophagy protein 1 from Homo sapiens (Human).